Consider the following 364-residue polypeptide: Probable dual-specificity RNA methyltransferase RlmN (364 aa).

Glutamate 107 serves as the catalytic Proton acceptor. Positions 113–346 constitute a Radical SAM core domain; the sequence is HEYGNSVCVT…ATIRREQGSD (234 aa). Cysteine 120 and cysteine 351 form a disulfide bridge. Cysteine 127, cysteine 131, and cysteine 134 together coordinate [4Fe-4S] cluster. Residues 177–178, serine 209, 232–234, and asparagine 308 each bind S-adenosyl-L-methionine; these read GE and SLH. The S-methylcysteine intermediate role is filled by cysteine 351.

It belongs to the radical SAM superfamily. RlmN family. The cofactor is [4Fe-4S] cluster.

The protein localises to the cytoplasm. The enzyme catalyses adenosine(2503) in 23S rRNA + 2 reduced [2Fe-2S]-[ferredoxin] + 2 S-adenosyl-L-methionine = 2-methyladenosine(2503) in 23S rRNA + 5'-deoxyadenosine + L-methionine + 2 oxidized [2Fe-2S]-[ferredoxin] + S-adenosyl-L-homocysteine. It catalyses the reaction adenosine(37) in tRNA + 2 reduced [2Fe-2S]-[ferredoxin] + 2 S-adenosyl-L-methionine = 2-methyladenosine(37) in tRNA + 5'-deoxyadenosine + L-methionine + 2 oxidized [2Fe-2S]-[ferredoxin] + S-adenosyl-L-homocysteine. Functionally, specifically methylates position 2 of adenine 2503 in 23S rRNA and position 2 of adenine 37 in tRNAs. Confers resistance to some classes of antibiotics. This is Probable dual-specificity RNA methyltransferase RlmN from Staphylococcus epidermidis (strain ATCC 35984 / DSM 28319 / BCRC 17069 / CCUG 31568 / BM 3577 / RP62A).